Here is a 98-residue protein sequence, read N- to C-terminus: DNA/RNA-binding protein Alba (98 aa).

Lys-16 is subject to N6-acetyllysine.

Belongs to the histone-like Alba family. Post-translationally, acetylated. Acetylation at Lys-16 decreases DNA-binding affinity.

It is found in the cytoplasm. Its subcellular location is the chromosome. Binds double-stranded DNA tightly but without sequence specificity. Involved in DNA compaction. The protein is DNA/RNA-binding protein Alba of Metallosphaera sedula (strain ATCC 51363 / DSM 5348 / JCM 9185 / NBRC 15509 / TH2).